Here is a 516-residue protein sequence, read N- to C-terminus: Gastrula zinc finger protein XlCGF53.1 (516 aa).

Disordered stretches follow at residues 1–33 (MGMW…GKKE) and 200–220 (GNQS…TDKP). The span at 200 to 218 (GNQSDCSINPLTEQIQGTD) shows a compositional bias: polar residues. 7 consecutive C2H2-type zinc fingers follow at residues 312–334 (YICS…QKTH), 354–376 (FPCS…QSSH), 382–404 (YACS…LKLH), 410–432 (FPCS…RRVH), 438–460 (YSCS…QRTH), 466–488 (FSCT…HRTH), and 494–516 (FSCT…HRTH).

Belongs to the krueppel C2H2-type zinc-finger protein family.

It localises to the nucleus. Its function is as follows. May be involved in transcriptional regulation. This Xenopus laevis (African clawed frog) protein is Gastrula zinc finger protein XlCGF53.1.